The following is a 286-amino-acid chain: Transmembrane protein 156 (286 aa).

The Cytoplasmic segment spans residues 1–4 (MTET). A helical transmembrane segment spans residues 5-25 (AFLKLFVAIVITFILVLPEFF). The Extracellular segment spans residues 26–214 (KTPKERTLEL…KSVTCSMKIT (189 aa)). 4 N-linked (GlcNAc...) asparagine glycosylation sites follow: N45, N54, N76, and N142. Residues 215–235 (WYVLVLFVFMLGIIFIIYKIL) form a helical membrane-spanning segment. At 236-286 (EEHRRVWRRQSHNYKSSSVLFRGHDSGKLSTLNVRVIPGYPWTIWTRDFDE) the chain is on the cytoplasmic side.

Its subcellular location is the membrane. The protein is Transmembrane protein 156 (Tmem156) of Rattus norvegicus (Rat).